The chain runs to 87 residues: Phosphoribosyl-ATP pyrophosphatase (87 aa).

Belongs to the PRA-PH family.

Its subcellular location is the cytoplasm. The enzyme catalyses 1-(5-phospho-beta-D-ribosyl)-ATP + H2O = 1-(5-phospho-beta-D-ribosyl)-5'-AMP + diphosphate + H(+). It functions in the pathway amino-acid biosynthesis; L-histidine biosynthesis; L-histidine from 5-phospho-alpha-D-ribose 1-diphosphate: step 2/9. This chain is Phosphoribosyl-ATP pyrophosphatase (hisE), found in Corynebacterium glutamicum (strain ATCC 13032 / DSM 20300 / JCM 1318 / BCRC 11384 / CCUG 27702 / LMG 3730 / NBRC 12168 / NCIMB 10025 / NRRL B-2784 / 534).